The chain runs to 664 residues: ATP-dependent zinc metalloprotease FtsH (664 aa).

The Cytoplasmic portion of the chain corresponds to 1-9 (MKQNIKRNW). Residues 10 to 30 (IWILIVMIVIGIILYFSIRNL) form a helical membrane-spanning segment. Residues 31–136 (FSTKVAEWSI…KSVATPQPNP (106 aa)) are Extracellular-facing. A helical transmembrane segment spans residues 137–157 (FLGILISSVPVLILIFVMVWI). The Cytoplasmic segment spans residues 158-664 (YRSQVKMMNG…SLIEKTSKKE (507 aa)). An ATP-binding site is contributed by 229 to 236 (GPPGTGKT). Residue H451 coordinates Zn(2+). The active site involves E452. Residues H455 and D529 each contribute to the Zn(2+) site. Basic and acidic residues predominate over residues 639–649 (IEEKDLSKNSE). A disordered region spans residues 639 to 664 (IEEKDLSKNSEDNNLDSLIEKTSKKE).

The protein in the central section; belongs to the AAA ATPase family. It in the C-terminal section; belongs to the peptidase M41 family. In terms of assembly, homohexamer. Zn(2+) serves as cofactor.

The protein resides in the cell membrane. Acts as a processive, ATP-dependent zinc metallopeptidase for both cytoplasmic and membrane proteins. Plays a role in the quality control of integral membrane proteins. The sequence is that of ATP-dependent zinc metalloprotease FtsH from Mycoplasmopsis synoviae (strain 53) (Mycoplasma synoviae).